We begin with the raw amino-acid sequence, 612 residues long: MSDPQMSMAATAAVSPSDYLQPAAATTQDSQPSPLALLAATCSKIGPPAVEAAVTPPAPPQPTPRKLVPIKPAPLPLSPCKNSFSILSSKGNILQIQGSQLSTSYPGGQFVFAIQNPTLINKGSRSNASIQYQVPQIQGNSSQTIQVQPSLTNQIQVIPGTNQAITTPSTSGHKPVPIKPAPVQKSSTTTTPVQSGANVVKLTGGGSNMTLTLPLNNLVNTSDIGGPAQLLTESPPTPLSKTNKKARKKSLPVSQPSVAVAEQVETVLIETTADNIIQAGNNLLIVQSPGGGQPAVVQQVQVVPPKAEQQQVVQIPQQALRVVQAASATLPTVPQKPSQNFQIQTTEPTPTQVYIRTPSGEVQTVLVQDSPPATAATTSTVTCNSPALRAPHLSGTSKKHSAAILRKERPLPKIAPAGSIISLNAAQLAAAAQAMQTININGVQVQGVPVTITNTGGQQQLTVQNVSGNNLTISGLSPTQIQLQMEQALAGEAQPGEKRRRMACTCPNCKDGEKRSGEQGKKKHVCHIPDCGKTFRKTSLLRAHVRLHTGERPFVCNWFFCGKRFTRSDELQRHARTHTGDKRFECAQCQKRFMRSDHLTKHYKTHLGTKGL.

S78 is subject to Phosphoserine. Disordered stretches follow at residues 166–195 and 226–250; these read TTPS…PVQS and GPAQ…RKKS. Polar residues predominate over residues 184–195; sequence QKSSTTTTPVQS. Residues 360–368 carry the 9aaTAD; inactive motif; sequence GEVQTVLVQ. C2H2-type zinc fingers lie at residues 524–548, 554–578, and 584–606; these read HVCH…VRLH, FVCN…ARTH, and FECA…YKTH.

This sequence belongs to the Sp1 C2H2-type zinc-finger protein family.

It localises to the nucleus. In terms of biological role, binds to GC box promoters elements and selectively activates mRNA synthesis from genes that contain functional recognition sites. This is Transcription factor Sp2 (Sp2) from Mus musculus (Mouse).